A 344-amino-acid chain; its full sequence is Holliday junction branch migration complex subunit RuvB (344 aa).

Residues 1–180 (MSRIVSGEAQ…FGIPVRLEFY (180 aa)) form a large ATPase domain (RuvB-L) region. ATP-binding residues include L19, R20, G61, K64, T65, T66, R170, Y180, and R217. Mg(2+) is bound at residue T65. A small ATPAse domain (RuvB-S) region spans residues 181-251 (THDELARVLL…AAAAALARLD (71 aa)). The tract at residues 254-344 (EVGLDALDRR…AAPPADLFDK (91 aa)) is head domain (RuvB-H). DNA is bound by residues R290, R309, and R314.

It belongs to the RuvB family. As to quaternary structure, homohexamer. Forms an RuvA(8)-RuvB(12)-Holliday junction (HJ) complex. HJ DNA is sandwiched between 2 RuvA tetramers; dsDNA enters through RuvA and exits via RuvB. An RuvB hexamer assembles on each DNA strand where it exits the tetramer. Each RuvB hexamer is contacted by two RuvA subunits (via domain III) on 2 adjacent RuvB subunits; this complex drives branch migration. In the full resolvosome a probable DNA-RuvA(4)-RuvB(12)-RuvC(2) complex forms which resolves the HJ.

It is found in the cytoplasm. The enzyme catalyses ATP + H2O = ADP + phosphate + H(+). Its function is as follows. The RuvA-RuvB-RuvC complex processes Holliday junction (HJ) DNA during genetic recombination and DNA repair, while the RuvA-RuvB complex plays an important role in the rescue of blocked DNA replication forks via replication fork reversal (RFR). RuvA specifically binds to HJ cruciform DNA, conferring on it an open structure. The RuvB hexamer acts as an ATP-dependent pump, pulling dsDNA into and through the RuvAB complex. RuvB forms 2 homohexamers on either side of HJ DNA bound by 1 or 2 RuvA tetramers; 4 subunits per hexamer contact DNA at a time. Coordinated motions by a converter formed by DNA-disengaged RuvB subunits stimulates ATP hydrolysis and nucleotide exchange. Immobilization of the converter enables RuvB to convert the ATP-contained energy into a lever motion, pulling 2 nucleotides of DNA out of the RuvA tetramer per ATP hydrolyzed, thus driving DNA branch migration. The RuvB motors rotate together with the DNA substrate, which together with the progressing nucleotide cycle form the mechanistic basis for DNA recombination by continuous HJ branch migration. Branch migration allows RuvC to scan DNA until it finds its consensus sequence, where it cleaves and resolves cruciform DNA. This Phenylobacterium zucineum (strain HLK1) protein is Holliday junction branch migration complex subunit RuvB.